Reading from the N-terminus, the 279-residue chain is MKKLYLIGKSLKHSISPLIHNKILSNFGIDAVYSNVELPDFEKLKEFVEMVKKDGDVVGFNITIPYKEDILEFCDEVSEDVRIIQAANTVKKEGEKLVAYNTDWLGFKRSLEEVGISVKDKRILILGAGGAAKACIYGLYRMGVKEVFVANRTYEKAESLKEVFQDILKILPVEWLRRYEFKYDIIINTTSVGMFPNIESSPFDFENYVAGIPVFVYDMIYNPPKTTFLEEAEKKGSKTENGLKMLVYQAVEAEKIWFDIVNLSQSFLLEILKECEKKI.

Shikimate-binding positions include 14–16 (SIS) and Thr63. Lys67 serves as the catalytic Proton acceptor. Glu79 provides a ligand contact to NADP(+). Asn88 and Asp103 together coordinate shikimate. NADP(+) contacts are provided by residues 127-131 (GAGGA), 151-156 (NRTYEK), and Met219. Shikimate is bound at residue Tyr221. Gly242 serves as a coordination point for NADP(+).

The protein belongs to the shikimate dehydrogenase family. As to quaternary structure, homodimer.

It catalyses the reaction shikimate + NADP(+) = 3-dehydroshikimate + NADPH + H(+). It participates in metabolic intermediate biosynthesis; chorismate biosynthesis; chorismate from D-erythrose 4-phosphate and phosphoenolpyruvate: step 4/7. Its function is as follows. Involved in the biosynthesis of the chorismate, which leads to the biosynthesis of aromatic amino acids. Catalyzes the reversible NADPH linked reduction of 3-dehydroshikimate (DHSA) to yield shikimate (SA). The chain is Shikimate dehydrogenase (NADP(+)) from Caldicellulosiruptor saccharolyticus (strain ATCC 43494 / DSM 8903 / Tp8T 6331).